Consider the following 207-residue polypeptide: Outer-membrane lipoprotein LolB (207 aa).

Residues 1-21 form the signal peptide; the sequence is MPLPDFRLIRLLPLAALVLTA. Cys-22 carries the N-palmitoyl cysteine lipid modification. The S-diacylglycerol cysteine moiety is linked to residue Cys-22.

It belongs to the LolB family. Monomer.

The protein localises to the cell outer membrane. Functionally, plays a critical role in the incorporation of lipoproteins in the outer membrane after they are released by the LolA protein. This is Outer-membrane lipoprotein LolB from Shigella boydii serotype 18 (strain CDC 3083-94 / BS512).